The primary structure comprises 507 residues: Cytochrome c-type protein ImcH (507 aa).

Transmembrane regions (helical) follow at residues 14–34, 45–65, and 100–120; these read ISLI…AFIA, YIGL…LILV, and LFIF…VASI. Heme is bound by residues Cys132, Cys136, Met140, His152, Cys157, Cys160, His161, Asp400, Cys449, Cys452, His453, Cys487, Cys490, His491, and Glu496.

This sequence belongs to the NapC/NirT/NrfH family. In terms of processing, binds 4 heme c groups covalently per subunit.

Its subcellular location is the cell inner membrane. Its function is as follows. Redox protein involved in a high-potential metal respiratory pathway. Is required only for electron transfer to terminal extracellular electron acceptors with redox potentials higher than -0.1 V. ImcH likely transfers electrons from the quinone pool to a periplasmic acceptor. The chain is Cytochrome c-type protein ImcH from Geobacter sulfurreducens (strain ATCC 51573 / DSM 12127 / PCA).